Reading from the N-terminus, the 164-residue chain is Phosphopantetheine adenylyltransferase (164 aa).

Residue Ser9 participates in substrate binding. Residues 9 to 10 and His17 each bind ATP; that span reads SF. Substrate is bound by residues Lys41, Ala78, and Arg92. ATP-binding positions include 93–95, Glu103, and 128–134; these read GLR and SRPITAT.

The protein belongs to the bacterial CoaD family. Homohexamer. The cofactor is Mg(2+).

The protein localises to the cytoplasm. The enzyme catalyses (R)-4'-phosphopantetheine + ATP + H(+) = 3'-dephospho-CoA + diphosphate. It participates in cofactor biosynthesis; coenzyme A biosynthesis; CoA from (R)-pantothenate: step 4/5. Functionally, reversibly transfers an adenylyl group from ATP to 4'-phosphopantetheine, yielding dephospho-CoA (dPCoA) and pyrophosphate. The sequence is that of Phosphopantetheine adenylyltransferase from Allorhizobium ampelinum (strain ATCC BAA-846 / DSM 112012 / S4) (Agrobacterium vitis (strain S4)).